A 239-amino-acid chain; its full sequence is NAD(P)H-hydrate epimerase (239 aa).

Residues 14–220 (AAALDQELMS…EMAEQYNLDI (207 aa)) form the YjeF N-terminal domain. Residue 64–68 (NNGGD) coordinates (6S)-NADPHX. K(+)-binding residues include N65 and D126. Residues 130 to 136 (GFSFSGE) and D159 contribute to the (6S)-NADPHX site. S162 serves as a coordination point for K(+).

Belongs to the NnrE/AIBP family. Requires K(+) as cofactor.

It is found in the cytoplasm. It localises to the mitochondrion. It catalyses the reaction (6R)-NADHX = (6S)-NADHX. The enzyme catalyses (6R)-NADPHX = (6S)-NADPHX. Its function is as follows. Catalyzes the epimerization of the S- and R-forms of NAD(P)HX, a damaged form of NAD(P)H that is a result of enzymatic or heat-dependent hydration. This is a prerequisite for the S-specific NAD(P)H-hydrate dehydratase to allow the repair of both epimers of NAD(P)HX. The sequence is that of NAD(P)H-hydrate epimerase from Phaeosphaeria nodorum (strain SN15 / ATCC MYA-4574 / FGSC 10173) (Glume blotch fungus).